A 513-amino-acid chain; its full sequence is Bifunctional pantoate ligase/cytidylate kinase (513 aa).

The tract at residues 1–282 is pantoate--beta-alanine ligase; sequence MGTFHRLTTT…VGQTRLIDNC (282 aa). 32–39 contacts ATP; the sequence is MGALHGGH. His-39 acts as the Proton donor in catalysis. Position 63 (Gln-63) interacts with (R)-pantoate. Residue Gln-63 participates in beta-alanine binding. Residue 152-155 participates in ATP binding; it reads GQKD. Residue Gln-158 coordinates (R)-pantoate. Residues Val-181 and 189-192 contribute to the ATP site; that span reads LSSR. The interval 283–513 is cytidylate kinase; it reads LLDRRRPILA…HLYRSRFPQP (231 aa).

The protein in the N-terminal section; belongs to the pantothenate synthetase family. This sequence in the C-terminal section; belongs to the cytidylate kinase family. Type 1 subfamily.

Its subcellular location is the cytoplasm. It carries out the reaction (R)-pantoate + beta-alanine + ATP = (R)-pantothenate + AMP + diphosphate + H(+). The catalysed reaction is CMP + ATP = CDP + ADP. It catalyses the reaction dCMP + ATP = dCDP + ADP. It participates in cofactor biosynthesis; (R)-pantothenate biosynthesis; (R)-pantothenate from (R)-pantoate and beta-alanine: step 1/1. In terms of biological role, catalyzes the condensation of pantoate with beta-alanine in an ATP-dependent reaction via a pantoyl-adenylate intermediate. Functionally, catalyzes the transfer of a phosphate group from ATP to either CMP or dCMP to form CDP or dCDP and ADP, respectively. In Thermosynechococcus vestitus (strain NIES-2133 / IAM M-273 / BP-1), this protein is Bifunctional pantoate ligase/cytidylate kinase.